The primary structure comprises 377 residues: Mechanosensory abnormality protein 6 (377 aa).

Topologically, residues 1–13 (MGLQSAAAHFINR) are cytoplasmic. The chain crosses the membrane as a helical span at residues 14–34 (FIIWITIFMVACFLLRLLVVL). The Extracellular portion of the chain corresponds to 35-377 (DLNKRVYNHT…HCDLTHSYIT (343 aa)). An intrachain disulfide couples Cys48 to Cys369. N-linked (GlcNAc...) asparagine glycosylation occurs at Asn94.

Belongs to the paraoxonase family. As to quaternary structure, component of a non-voltage-gated amiloride-sensitive cation channel complex (also called the degenerin channel complex) composed of at least the mec-2, mec-4, mec-6 and mec-10 subunits; the complex mediates mechanotransduction in touch cells. Interacts with mec-2, mec-4 and mec-10. In terms of processing, glycosylated. As to expression, expressed in neurons including the six touch receptors, ventral cord motor neurons, HSN, PVD, PVC, IL1, and several neurons near the nerve ring, in the anal ganglion and in the male tail sensory rays, in muscles including the body wall, vulval, intestinal, anal depressor and sphincter muscles, and in the excretory canal.

The protein resides in the cell membrane. It localises to the cell projection. The protein localises to the axon. In terms of biological role, subunit of an amiloride-sensitive cation channel (degenerin channel complex) permeable for sodium, potassium, lithium and N-methylglucamine, and required for mechanosensory transduction (touch sensitivity). Interacts with degenerin channel proteins and stabilizes the channel. Plays a role in mechanosensory transduction (touch sensitivity). This is Mechanosensory abnormality protein 6 from Caenorhabditis elegans.